The sequence spans 577 residues: Urease subunit alpha (577 aa).

In terms of domain architecture, Urease spans 136 to 577 (GGIDCHVHFI…LPMAQRYFLF (442 aa)). Ni(2+) is bound by residues His-141, His-143, and Lys-224. Residue Lys-224 is modified to N6-carboxylysine. Position 226 (His-226) interacts with substrate. His-253 and His-279 together coordinate Ni(2+). His-327 (proton donor) is an active-site residue. Asp-367 contacts Ni(2+).

The protein belongs to the metallo-dependent hydrolases superfamily. Urease alpha subunit family. In terms of assembly, heterotrimer of UreA (gamma), UreB (beta) and UreC (alpha) subunits. Three heterotrimers associate to form the active enzyme. Ni cation is required as a cofactor. Post-translationally, carboxylation allows a single lysine to coordinate two nickel ions.

The protein localises to the cytoplasm. It carries out the reaction urea + 2 H2O + H(+) = hydrogencarbonate + 2 NH4(+). It participates in nitrogen metabolism; urea degradation; CO(2) and NH(3) from urea (urease route): step 1/1. The sequence is that of Urease subunit alpha from Mycobacteroides abscessus (strain ATCC 19977 / DSM 44196 / CCUG 20993 / CIP 104536 / JCM 13569 / NCTC 13031 / TMC 1543 / L948) (Mycobacterium abscessus).